Consider the following 287-residue polypeptide: Nuclease S1 (287 aa).

Residues 1-20 (MPRLLPISAATLALAQLTYG) form the signal peptide. A divalent metal cation-binding residues include Trp-21, His-26, Asp-65, and His-80. Residues 21 to 26 (WGNLGH), 65 to 71 (DTYKYTD), 80 to 83 (HFID), and 93 to 98 (GVDYDR) contribute to the substrate site. Disulfide bonds link Cys-92-Cys-236 and Cys-100-Cys-105. Residues Asn-112 and Asn-122 are each glycosylated (N-linked (GlcNAc...) asparagine). 5 residues coordinate a divalent metal cation: His-135, Asp-139, His-145, His-168, and Asp-172. Residues 135 to 183 (HIIGDIHQPLHDENLEAGGNGIDVTYDGETTNLHHIWDTNMPEEAAGGY) are substrate binding. Asn-248 carries an N-linked (GlcNAc...) asparagine glycan.

This sequence belongs to the nuclease type I family. Monomer. Zn(2+) serves as cofactor.

The catalysed reaction is Endonucleolytic cleavage to 5'-phosphomononucleotide and 5'-phosphooligonucleotide end-products.. Its activity is regulated as follows. Inhibited by inorganic phosphate (Pi). In terms of biological role, hydrolyzes only single-stranded DNA and RNA without apparent specificity for bases. The chain is Nuclease S1 from Aspergillus oryzae (strain ATCC 42149 / RIB 40) (Yellow koji mold).